The chain runs to 207 residues: Ras-related protein Rab-7a (207 aa).

An N-acetylthreonine modification is found at T2. Residues S17, G18, V19, G20, K21, T22, S23, S34, N35, Y37, and T40 each contribute to the GTP site. T22 lines the Mg(2+) pocket. A Switch 1 motif is present at residues 28–41 (YVNKKFSNQYKATI). Mg(2+)-binding residues include T40 and D63. G66 contributes to the GTP binding site. The Switch 2 motif lies at 67–82 (QERFQSLGVAFYRGAD). A Phosphoserine modification is found at S72. GTP contacts are provided by N125, K126, D128, A156, and K157. Glycyl lysine isopeptide (Lys-Gly) (interchain with G-Cter in ubiquitin) cross-links involve residues K191 and K194. S-geranylgeranyl cysteine attachment occurs at residues C205 and C207. A Cysteine methyl ester modification is found at C207.

It belongs to the small GTPase superfamily. Rab family. Interacts with NTRK1/TRKA. Interacts with RILP. Interacts with PSMA7. Interacts with RNF115. Interacts with FYCO1. Interacts with the PIK3C3/VPS34-PIK3R4 complex. The GTP-bound form interacts with OSBPL1A. The GTP-bound form interacts with RAC1. Interacts with CLN3. Interacts with CHM, the substrate-binding subunit of the Rab geranylgeranyltransferase complex. Interacts with C9orf72. Does not interact with HPS4 and the BLOC-3 complex (heterodimer of HPS1 and HPS4). Interacts with CLN5. Interacts with PLEKHM1 (via N- and C-terminus). Interacts with PRPH; the interaction is direct. Interacts with VPS13A. The GDP-bound form interacts with RIMOC1. Interacts with the MON1A-CCZ1B complex and this interaction is enhanced in the presence of RIMOC1. Interacts with VPS39 and VPS41. Forms a ternary complex with LAMP2 and RUFY4; the interaction with LAMP2 is mediated by RUFY4 (via RUN and coiled coil domains). Requires Mg(2+) as cofactor. In terms of processing, deubiquitination at Lys-191 and Lys-194 by USP32. Phosphorylated at Ser-72 by LRRK1; phosphorylation is dependent on protein kinase C (PKC) activation of LRRK1. Post-translationally, prenylated. Prenylation is required for association with cellular membranes.

Its subcellular location is the cytoplasmic vesicle. It localises to the phagosome membrane. It is found in the late endosome membrane. The protein localises to the lysosome membrane. The protein resides in the melanosome membrane. Its subcellular location is the autophagosome membrane. It localises to the lipid droplet. It is found in the endosome membrane. The protein localises to the mitochondrion membrane. It carries out the reaction GTP + H2O = GDP + phosphate + H(+). Its activity is regulated as follows. Regulated by guanine nucleotide exchange factors (GEFs) which promote the exchange of bound GDP for free GTP. Regulated by GTPase activating proteins (GAPs) which increase the GTP hydrolysis activity. Inhibited by GDP dissociation inhibitors (GDIs). In terms of biological role, the small GTPases Rab are key regulators of intracellular membrane trafficking, from the formation of transport vesicles to their fusion with membranes. Rabs cycle between an inactive GDP-bound form and an active GTP-bound form that is able to recruit to membranes different sets of downstream effectors directly responsible for vesicle formation, movement, tethering and fusion. In its active state, RAB7A binds to a variety of effector proteins playing a key role in the regulation of endo-lysosomal trafficking. Governs early-to-late endosomal maturation, microtubule minus-end as well as plus-end directed endosomal migration and positioning, and endosome-lysosome transport through different protein-protein interaction cascades. Also plays a central role in growth-factor-mediated cell signaling, nutrient-transporter-mediated nutrient uptake, neurotrophin transport in the axons of neurons and lipid metabolism. Also involved in regulation of some specialized endosomal membrane trafficking, such as maturation of melanosomes, pathogen-induced phagosomes (or vacuoles) and autophagosomes. Plays a role in the maturation and acidification of phagosomes that engulf pathogens, such as S.aureus and Mycobacteria. Plays a role in the fusion of phagosomes with lysosomes. In concert with RAC1, plays a role in regulating the formation of RBs (ruffled borders) in osteoclasts. Controls the endosomal trafficking and neurite outgrowth signaling of NTRK1/TRKA. Regulates the endocytic trafficking of the EGF-EGFR complex by regulating its lysosomal degradation. Involved in the ADRB2-stimulated lipolysis through lipophagy, a cytosolic lipase-independent autophagic pathway. Required for the exosomal release of SDCBP, CD63 and syndecan. Required for vesicular trafficking and cell surface expression of ACE2. May play a role in PRPH neuronal intermediate filament assembly. In Bos taurus (Bovine), this protein is Ras-related protein Rab-7a (RAB7A).